Here is a 307-residue protein sequence, read N- to C-terminus: Protoheme IX farnesyltransferase (307 aa).

The next 9 membrane-spanning stretches (helical) occupy residues 31 to 51 (VTQL…PGMV), 55 to 75 (VLIG…AINC), 103 to 123 (TLVF…VYAN), 125 to 145 (LTMW…TILL), 153 to 173 (IVIG…AVAG), 179 to 199 (AWFL…ALAL), 223 to 243 (LLHI…PFVY), 246 to 266 (SGYI…AYAW), and 285 to 305 (ILYL…KFVP).

The protein belongs to the UbiA prenyltransferase family. Protoheme IX farnesyltransferase subfamily.

The protein localises to the cell inner membrane. The enzyme catalyses heme b + (2E,6E)-farnesyl diphosphate + H2O = Fe(II)-heme o + diphosphate. It functions in the pathway porphyrin-containing compound metabolism; heme O biosynthesis; heme O from protoheme: step 1/1. Functionally, converts heme B (protoheme IX) to heme O by substitution of the vinyl group on carbon 2 of heme B porphyrin ring with a hydroxyethyl farnesyl side group. In Cupriavidus necator (strain ATCC 17699 / DSM 428 / KCTC 22496 / NCIMB 10442 / H16 / Stanier 337) (Ralstonia eutropha), this protein is Protoheme IX farnesyltransferase.